A 631-amino-acid polypeptide reads, in one-letter code: Fatty acid ABC transporter ATP-binding/permease protein (631 aa).

Low complexity predominate over residues 1–11 (MTAPPGARPRA). Positions 1–20 (MTAPPGARPRAASPPPNMRS) are disordered. A run of 3 helical transmembrane segments spans residues 42–62 (IAVI…PRIL), 123–143 (LALA…QARL), and 205–225 (ILTM…LALI). The ABC transmembrane type-1 domain occupies 42-365 (IAVITLGIAG…LAGMYNALQS (324 aa)). Residues 397 to 631 (VEFEHVNFAY…RGVYYQMTRA (235 aa)) form the ABC transporter domain. 430 to 437 (GPTGAGKT) is an ATP binding site.

Belongs to the ABC transporter superfamily. Lipid exporter (TC 3.A.1.106) family.

The protein resides in the cell inner membrane. Functionally, ABC transporter involved in fatty acid import. Transmembrane domains (TMD) form a pore in the membrane and the ATP-binding domain (NBD) is responsible for energy generation. The protein is Fatty acid ABC transporter ATP-binding/permease protein of Mycobacterium bovis (strain ATCC BAA-935 / AF2122/97).